A 168-amino-acid chain; its full sequence is S-ribosylhomocysteine lyase (168 aa).

Fe cation-binding residues include histidine 54, histidine 58, and cysteine 128.

Belongs to the LuxS family. Homodimer. The cofactor is Fe cation.

It carries out the reaction S-(5-deoxy-D-ribos-5-yl)-L-homocysteine = (S)-4,5-dihydroxypentane-2,3-dione + L-homocysteine. Its function is as follows. Involved in the synthesis of autoinducer 2 (AI-2) which is secreted by bacteria and is used to communicate both the cell density and the metabolic potential of the environment. The regulation of gene expression in response to changes in cell density is called quorum sensing. Catalyzes the transformation of S-ribosylhomocysteine (RHC) to homocysteine (HC) and 4,5-dihydroxy-2,3-pentadione (DPD). This chain is S-ribosylhomocysteine lyase, found in Neisseria meningitidis serogroup C (strain 053442).